A 141-amino-acid polypeptide reads, in one-letter code: Putative antiporter subunit mnhB2 (141 aa).

The next 4 membrane-spanning stretches (helical) occupy residues 10-30 (TVTKIVVFILLTFGFYLFLAG), 35-55 (GGGFIGGLVFSSAFLLMFLAF), 70-90 (ILMICGSLLSFLTAVVPMFFG), and 116-136 (VFEAGIVLAVVGVVVTVMLSI).

Belongs to the CPA3 antiporters (TC 2.A.63) subunit B family. May form a heterooligomeric complex that consists of seven subunits: mnhA2, mnhB2, mnhC2, mnhD2, mnhE2, mnhF2 and mnhG2.

Its subcellular location is the cell membrane. In Staphylococcus saprophyticus subsp. saprophyticus (strain ATCC 15305 / DSM 20229 / NCIMB 8711 / NCTC 7292 / S-41), this protein is Putative antiporter subunit mnhB2 (mnhB2).